Consider the following 222-residue polypeptide: Secreted protein D (222 aa).

The N-terminal stretch at methionine 1–cysteine 22 is a signal peptide. N-linked (GlcNAc...) asparagine glycosylation is present at asparagine 25.

The protein belongs to the Sct family.

It localises to the secreted. This Dictyostelium discoideum (Social amoeba) protein is Secreted protein D.